A 122-amino-acid chain; its full sequence is Large ribosomal subunit protein bL12 (122 aa).

Belongs to the bacterial ribosomal protein bL12 family. As to quaternary structure, homodimer. Part of the ribosomal stalk of the 50S ribosomal subunit. Forms a multimeric L10(L12)X complex, where L10 forms an elongated spine to which 2 to 4 L12 dimers bind in a sequential fashion. Binds GTP-bound translation factors.

Functionally, forms part of the ribosomal stalk which helps the ribosome interact with GTP-bound translation factors. Is thus essential for accurate translation. In Latilactobacillus sakei subsp. sakei (strain 23K) (Lactobacillus sakei subsp. sakei), this protein is Large ribosomal subunit protein bL12.